Reading from the N-terminus, the 328-residue chain is Ribosomal RNA small subunit methyltransferase H (328 aa).

Residues 64 to 66 (GGH), D83, F112, D129, and Q136 contribute to the S-adenosyl-L-methionine site.

This sequence belongs to the methyltransferase superfamily. RsmH family.

The protein localises to the cytoplasm. It catalyses the reaction cytidine(1402) in 16S rRNA + S-adenosyl-L-methionine = N(4)-methylcytidine(1402) in 16S rRNA + S-adenosyl-L-homocysteine + H(+). Functionally, specifically methylates the N4 position of cytidine in position 1402 (C1402) of 16S rRNA. This is Ribosomal RNA small subunit methyltransferase H from Bdellovibrio bacteriovorus (strain ATCC 15356 / DSM 50701 / NCIMB 9529 / HD100).